The chain runs to 923 residues: Lysosomal acid alpha-glucosidase (923 aa).

Positions 1–17 (MKHQVLLPLLVTTAIIA) are cleaved as a signal peptide. A propeptide spanning residues 18-36 (GSVGVYTHSKPLLGQSQDQ) is cleaved from the precursor. N-linked (GlcNAc...) asparagine glycans are attached at residues Asn65, Asn405, and Asn440. Asp455 acts as the Nucleophile in catalysis. Residue Glu458 is part of the active site. The Proton donor role is filled by Asp585. Residues Asn586, Asn621, Asn646, Asn848, Asn908, and Asn912 are each glycosylated (N-linked (GlcNAc...) asparagine).

It belongs to the glycosyl hydrolase 31 family.

The protein localises to the lysosome. Its subcellular location is the secreted. The catalysed reaction is Hydrolysis of terminal, non-reducing (1-&gt;4)-linked alpha-D-glucose residues with release of alpha-D-glucose.. In terms of biological role, essential for the degradation of glycogen to glucose in lysosomes. Has both alpha-1,4 and alpha-1,6-glucosidase activity. This chain is Lysosomal acid alpha-glucosidase, found in Tetrahymena pyriformis.